The primary structure comprises 208 residues: Protein-L-isoaspartate O-methyltransferase (208 aa).

Residue serine 59 is part of the active site.

It belongs to the methyltransferase superfamily. L-isoaspartyl/D-aspartyl protein methyltransferase family.

The protein resides in the cytoplasm. The enzyme catalyses [protein]-L-isoaspartate + S-adenosyl-L-methionine = [protein]-L-isoaspartate alpha-methyl ester + S-adenosyl-L-homocysteine. In terms of biological role, catalyzes the methyl esterification of L-isoaspartyl residues in peptides and proteins that result from spontaneous decomposition of normal L-aspartyl and L-asparaginyl residues. It plays a role in the repair and/or degradation of damaged proteins. In Sodalis glossinidius (strain morsitans), this protein is Protein-L-isoaspartate O-methyltransferase.